The following is a 521-amino-acid chain: Glutamate--cysteine ligase (521 aa).

The protein belongs to the glutamate--cysteine ligase type 1 family. Type 1 subfamily.

The catalysed reaction is L-cysteine + L-glutamate + ATP = gamma-L-glutamyl-L-cysteine + ADP + phosphate + H(+). Its pathway is sulfur metabolism; glutathione biosynthesis; glutathione from L-cysteine and L-glutamate: step 1/2. This chain is Glutamate--cysteine ligase (gshA), found in Buchnera aphidicola subsp. Baizongia pistaciae (strain Bp).